Reading from the N-terminus, the 178-residue chain is Caveolin-1 (178 aa).

Position 2 is an N-acetylserine (S2). Phosphoserine is present on S2. The required for homooligomerization stretch occupies residues S2–V94. Residues S2–S104 lie on the Cytoplasmic side of the membrane. K5 is subject to N6-acetyllysine; alternate. Residue K5 forms a Glycyl lysine isopeptide (Lys-Gly) (interchain with G-Cter in ubiquitin); alternate linkage. At Y6 the chain carries Phosphotyrosine. S9 is modified (phosphoserine). At Y14 the chain carries Phosphotyrosine; by ABL1. The residue at position 25 (Y25) is a Phosphotyrosine. Glycyl lysine isopeptide (Lys-Gly) (interchain with G-Cter in ubiquitin) cross-links involve residues K26, K30, K39, K47, and K57. Residues D82 to V94 form an interaction with CAVIN3 region. An intramembrane region (helical) is located at residues T105–L125. At H126–I178 the chain is on the cytoplasmic side. Positions V131–Q142 are interacts with SPRY1, SPRY2, SPRY3 and SPRY4. 3 S-palmitoyl cysteine lipidation sites follow: C133, C143, and C156. The segment at S149 to F160 is interacts with SPRY1, SPRY2, and SPRY4. The segment at F167–I178 is interacts with SPRY1, SPRY2, SPRY3 and SPRY4.

This sequence belongs to the caveolin family. In terms of assembly, homooligomer. Interacts with GLIPR2. Interacts with NOSTRIN. Interacts with SNAP25 and STX1A. Interacts (via the N-terminus) with DPP4; the interaction is direct. Interacts with CTNNB1, CDH1 and JUP. Interacts with PACSIN2; this interaction induces membrane tubulation. Interacts with SLC7A9. Interacts with BMX and BTK. Interacts with TGFBR1. Interacts with CAVIN3 (via leucine-zipper domain) in a cholesterol-sensitive manner. Interacts with CAVIN1. Interacts with EHD2 in a cholesterol-dependent manner. Forms a ternary complex with UBXN6 and VCP; mediates CAV1 targeting to lysosomes for degradation. Interacts with ABCG1; this interaction regulates ABCG1-mediated cholesterol efflux. Interacts with NEU3; this interaction enhances NEU3 sialidase activity within caveola. Interacts (via C-terminus) with SPRY1, SPRY2 (via C-terminus), SPRY3, and SPRY4. Interacts with IGFBP5; this interaction allows trafficking of IGFBP5 from the plasma membrane to the nucleus. Phosphorylated at Tyr-14 by ABL1 in response to oxidative stress. Post-translationally, ubiquitinated. Undergo monoubiquitination and multi- and/or polyubiquitination. Monoubiquitination of N-terminal lysines promotes integration in a ternary complex with UBXN6 and VCP which promotes oligomeric CAV1 targeting to lysosomes for degradation. Ubiquitinated by ZNRF1; leading to degradation and modulation of the TLR4-mediated immune response.

The protein localises to the golgi apparatus membrane. Its subcellular location is the cell membrane. The protein resides in the membrane. It is found in the caveola. It localises to the membrane raft. In terms of biological role, may act as a scaffolding protein within caveolar membranes. Forms a stable heterooligomeric complex with CAV2 that targets to lipid rafts and drives caveolae formation. Mediates the recruitment of CAVIN proteins (CAVIN1/2/3/4) to the caveolae. Interacts directly with G-protein alpha subunits and can functionally regulate their activity. Involved in the costimulatory signal essential for T-cell receptor (TCR)-mediated T-cell activation. Its binding to DPP4 induces T-cell proliferation and NF-kappa-B activation in a T-cell receptor/CD3-dependent manner. Recruits CTNNB1 to caveolar membranes and may regulate CTNNB1-mediated signaling through the Wnt pathway. Negatively regulates TGFB1-mediated activation of SMAD2/3 by mediating the internalization of TGFBR1 from membrane rafts leading to its subsequent degradation. Binds 20(S)-hydroxycholesterol (20(S)-OHC). In Dasypus novemcinctus (Nine-banded armadillo), this protein is Caveolin-1 (CAV1).